The primary structure comprises 257 residues: THAP domain-containing protein 10 (257 aa).

Residues 1–90 (MPARCVAAHC…LVAGAVPTLH (90 aa)) form a THAP-type zinc finger. Residues 154–168 (QPHADNPSNTVTSVP) are compositionally biased toward polar residues. A disordered region spans residues 154-178 (QPHADNPSNTVTSVPTHCEEGPVHK).

This chain is THAP domain-containing protein 10 (THAP10), found in Homo sapiens (Human).